A 493-amino-acid chain; its full sequence is Cobyric acid synthase (493 aa).

Residues 246–440 (PIDIAVIKMP…IHGVFDGVAF (195 aa)) form the GATase cobBQ-type domain. The active-site Nucleophile is the Cys-326. His-432 is an active-site residue.

The protein belongs to the CobB/CobQ family. CobQ subfamily.

Its pathway is cofactor biosynthesis; adenosylcobalamin biosynthesis. Functionally, catalyzes amidations at positions B, D, E, and G on adenosylcobyrinic A,C-diamide. NH(2) groups are provided by glutamine, and one molecule of ATP is hydrogenolyzed for each amidation. In Clostridium botulinum (strain Loch Maree / Type A3), this protein is Cobyric acid synthase.